Reading from the N-terminus, the 90-residue chain is Small ribosomal subunit protein bS16 (90 aa).

It belongs to the bacterial ribosomal protein bS16 family.

The chain is Small ribosomal subunit protein bS16 from Streptococcus pyogenes serotype M4 (strain MGAS10750).